A 113-amino-acid chain; its full sequence is U11-theraphotoxin-Hhn1g (113 aa).

An N-terminal signal peptide occupies residues 1–21 (MNTVRVTFLLVFVLAVSLGQA). Residues 22–74 (DKDENRMEMQEKTEQGKSYLDFAENLLLQKLEELEAKLLEEDSEESRNSRQKR) constitute a propeptide that is removed on maturation. Positions 61-83 (EEDSEESRNSRQKRCIGEGVPCD) are disordered. Cystine bridges form between C75/C90, C82/C95, and C89/C110.

The protein belongs to the neurotoxin 14 (magi-1) family. 01 (HNTX-16) subfamily. In terms of tissue distribution, expressed by the venom gland.

The protein localises to the secreted. In terms of biological role, probable ion channel inhibitor. This Cyriopagopus hainanus (Chinese bird spider) protein is U11-theraphotoxin-Hhn1g.